Consider the following 536-residue polypeptide: Probable tyrosyl-DNA phosphodiesterase (536 aa).

The active-site Nucleophile is the histidine 122. Residue lysine 124 coordinates substrate. An interaction with DNA region spans residues 315-318; sequence SMGS. Residue histidine 401 is the Proton donor/acceptor of the active site. Lysine 403 is a substrate binding site.

This sequence belongs to the tyrosyl-DNA phosphodiesterase family.

It is found in the nucleus. Its function is as follows. DNA repair enzyme that can remove a variety of covalent adducts from DNA through hydrolysis of a 3'-phosphodiester bond, giving rise to DNA with a free 3' phosphate. Catalyzes the hydrolysis of dead-end complexes between DNA and the topoisomerase I active site tyrosine residue. Hydrolyzes 3'-phosphoglycolates on protruding 3' ends on DNA double-strand breaks due to DNA damage by radiation and free radicals. Acts on blunt-ended double-strand DNA breaks and on single-stranded DNA. May have low 3'exonuclease activity and may be able to remove a single nucleoside from the 3'end of DNA and RNA molecules with 3'hydroxyl groups. Has no exonuclease activity towards DNA or RNA with a 3'phosphate. The polypeptide is Probable tyrosyl-DNA phosphodiesterase (Schizosaccharomyces pombe (strain 972 / ATCC 24843) (Fission yeast)).